Here is a 474-residue protein sequence, read N- to C-terminus: MSKKLHIKTWGCQMNEYDSSKMADLLGEYQGYTLTEEASEADILLLNTCSIREKAQEKVFHQLGRWKTLKDKNPNLIIGVGGCVASQEGKAIKDRAQCVDIIFGPQTLHRLPEMIEQVRRGEKAVIDISFPEIEKFDRLPEPRAEGPTAFVSIMEGCSKYCSFCVVPYTRGEEVSRPSDDIILEIAQLAEQGVREVNLLGQNVNAYRGATHDGAICTFAELLRFVAAIDGIDRIRFTTSHPIEFTQDIIDVYEDTPELVSFLHLPVQSGSDRILTAMKRGHMAIEYKSIIRRLRKAREGIQISSDFIIGFPGETKEDFADTIKLIEDIGFDHSFSFIYSARPGTPAADLPDNVDMEEKKQRLAILQDRITQQAMRYSRHMMGTVQRILVEGPSVKNPMELRGRTENNRVVNFEGQPKHIGTFVDVEIVDVYTNSLRGVFIRGEDEMDLRRSLRPAEILAKRKQDDELGVTQFKP.

The MTTase N-terminal domain maps to 3-120; sequence KKLHIKTWGC…LPEMIEQVRR (118 aa). The [4Fe-4S] cluster site is built by C12, C49, C83, C157, C161, and C164. The region spanning 143-375 is the Radical SAM core domain; that stretch reads RAEGPTAFVS…QDRITQQAMR (233 aa). The 64-residue stretch at 378 to 441 folds into the TRAM domain; the sequence is RHMMGTVQRI…TNSLRGVFIR (64 aa).

It belongs to the methylthiotransferase family. MiaB subfamily. As to quaternary structure, monomer. [4Fe-4S] cluster is required as a cofactor.

The protein localises to the cytoplasm. The catalysed reaction is N(6)-dimethylallyladenosine(37) in tRNA + (sulfur carrier)-SH + AH2 + 2 S-adenosyl-L-methionine = 2-methylsulfanyl-N(6)-dimethylallyladenosine(37) in tRNA + (sulfur carrier)-H + 5'-deoxyadenosine + L-methionine + A + S-adenosyl-L-homocysteine + 2 H(+). Its function is as follows. Catalyzes the methylthiolation of N6-(dimethylallyl)adenosine (i(6)A), leading to the formation of 2-methylthio-N6-(dimethylallyl)adenosine (ms(2)i(6)A) at position 37 in tRNAs that read codons beginning with uridine. This chain is tRNA-2-methylthio-N(6)-dimethylallyladenosine synthase, found in Shewanella baltica (strain OS155 / ATCC BAA-1091).